Here is an 883-residue protein sequence, read N- to C-terminus: Phosphoenolpyruvate carboxylase (883 aa).

Active-site residues include H138 and K546.

The protein belongs to the PEPCase type 1 family. It depends on Mg(2+) as a cofactor.

The catalysed reaction is oxaloacetate + phosphate = phosphoenolpyruvate + hydrogencarbonate. Functionally, forms oxaloacetate, a four-carbon dicarboxylic acid source for the tricarboxylic acid cycle. This is Phosphoenolpyruvate carboxylase from Salmonella gallinarum (strain 287/91 / NCTC 13346).